We begin with the raw amino-acid sequence, 318 residues long: Serpentine receptor class delta-25 (318 aa).

Helical transmembrane passes span 5 to 25, 38 to 58, 88 to 108, 126 to 146, 176 to 196, 226 to 246, and 258 to 278; these read LLHS…MYLA, VVIT…FFVM, HMFM…SYLF, IAFY…SIYI, ITLL…YTFI, TFKL…VAMF, and IVSV…IIFV.

The protein belongs to the nematode receptor-like protein srd family.

It localises to the membrane. The sequence is that of Serpentine receptor class delta-25 (srd-25) from Caenorhabditis elegans.